The chain runs to 85 residues: Large ribosomal subunit protein bL27 (85 aa).

The protein belongs to the bacterial ribosomal protein bL27 family.

This chain is Large ribosomal subunit protein bL27, found in Campylobacter curvus (strain 525.92).